A 328-amino-acid polypeptide reads, in one-letter code: MVKLAIDMMGGDNAPDIVLEAVQKAVEDFKDLEIILFGDEKKYKLNHERIEFRHCSEKIEMEDEPVRAIKRKKDSSMVKMAEAVKSGEADGCVSAGNTGALMSAGLFIVGRIKGVARPALVVTLPTIDGKGFVFLDVGANADAKPEHLLQYAQLGDIYAQKIRGIDNPKISLLNIGTEPAKGNSLTKKSYELLNQDHSLNFVGNIEAKTLMDGDTDVVVTDGYTGNMVLKNLEGTAKSIGKMLKDTIMSSTKNKLAGAILKKDLAEFAKKMDYSEYGGSVLLGLEGTVVKAHGSSNAKAFYSAIRQAKIAGEQNIVQTMKETVGESNE.

The protein belongs to the PlsX family. In terms of assembly, homodimer. Probably interacts with PlsY.

The protein localises to the cytoplasm. It carries out the reaction a fatty acyl-[ACP] + phosphate = an acyl phosphate + holo-[ACP]. It functions in the pathway lipid metabolism; phospholipid metabolism. Its function is as follows. Catalyzes the reversible formation of acyl-phosphate (acyl-PO(4)) from acyl-[acyl-carrier-protein] (acyl-ACP). This enzyme utilizes acyl-ACP as fatty acyl donor, but not acyl-CoA. This chain is Phosphate acyltransferase, found in Staphylococcus aureus (strain bovine RF122 / ET3-1).